A 564-amino-acid chain; its full sequence is Dihydroxy-acid dehydratase (564 aa).

Residue C53 coordinates [2Fe-2S] cluster. Residue D85 participates in Mg(2+) binding. [2Fe-2S] cluster is bound at residue C126. Mg(2+) contacts are provided by D127 and K128. Residue K128 is modified to N6-carboxylysine. C203 is a binding site for [2Fe-2S] cluster. Mg(2+) is bound at residue E454. S480 serves as the catalytic Proton acceptor.

The protein belongs to the IlvD/Edd family. Homodimer. The cofactor is [2Fe-2S] cluster. Mg(2+) serves as cofactor.

The enzyme catalyses (2R)-2,3-dihydroxy-3-methylbutanoate = 3-methyl-2-oxobutanoate + H2O. It carries out the reaction (2R,3R)-2,3-dihydroxy-3-methylpentanoate = (S)-3-methyl-2-oxopentanoate + H2O. It functions in the pathway amino-acid biosynthesis; L-isoleucine biosynthesis; L-isoleucine from 2-oxobutanoate: step 3/4. Its pathway is amino-acid biosynthesis; L-valine biosynthesis; L-valine from pyruvate: step 3/4. Functionally, functions in the biosynthesis of branched-chain amino acids. Catalyzes the dehydration of (2R,3R)-2,3-dihydroxy-3-methylpentanoate (2,3-dihydroxy-3-methylvalerate) into 2-oxo-3-methylpentanoate (2-oxo-3-methylvalerate) and of (2R)-2,3-dihydroxy-3-methylbutanoate (2,3-dihydroxyisovalerate) into 2-oxo-3-methylbutanoate (2-oxoisovalerate), the penultimate precursor to L-isoleucine and L-valine, respectively. This Mycobacterium leprae (strain TN) protein is Dihydroxy-acid dehydratase.